The primary structure comprises 838 residues: Leucine--tRNA ligase (838 aa).

A 'HIGH' region motif is present at residues 36-46 (PYPSGKIHMGH). The 'KMSKS' region signature appears at 611-615 (KMSKS). ATP is bound at residue lysine 614.

It belongs to the class-I aminoacyl-tRNA synthetase family.

The protein localises to the cytoplasm. The enzyme catalyses tRNA(Leu) + L-leucine + ATP = L-leucyl-tRNA(Leu) + AMP + diphosphate. In Wolbachia sp. subsp. Drosophila simulans (strain wRi), this protein is Leucine--tRNA ligase.